Here is a 674-residue protein sequence, read N- to C-terminus: Sterile alpha motif domain-containing protein 15 (674 aa).

Acidic residues predominate over residues 1 to 18 (MAEVPEDYDSGPDEDGEL). Residues 1–448 (MAEVPEDYDS…LEHREPKRGK (448 aa)) are disordered. Composition is skewed to basic and acidic residues over residues 87-142 (IAKE…EEAK), 195-223 (ESLR…KLGE), and 236-274 (TKPE…KSSE). Acidic residues predominate over residues 276 to 290 (AGLEPPEETQPEVPE). Basic and acidic residues-rich tracts occupy residues 291–322 (EMQR…KSTD), 330–346 (EEIK…KTNE), 354–372 (EMMK…EKKN), and 391–429 (VEEK…EPIK). The SAM domain maps to 545–608 (WDPEEVAEWI…SRHTQELLEI (64 aa)).

The polypeptide is Sterile alpha motif domain-containing protein 15 (SAMD15) (Homo sapiens (Human)).